The sequence spans 351 residues: 3-dehydroquinate synthase (351 aa).

NAD(+) is bound by residues 60–65 (DGEEYK), 94–98 (GVISD), 118–119 (TT), Lys-131, Lys-140, and 158–161 (FLKT). 3 residues coordinate Zn(2+): Glu-173, His-239, and His-256.

It belongs to the sugar phosphate cyclases superfamily. Dehydroquinate synthase family. Co(2+) is required as a cofactor. It depends on Zn(2+) as a cofactor. The cofactor is NAD(+).

The protein localises to the cytoplasm. It catalyses the reaction 7-phospho-2-dehydro-3-deoxy-D-arabino-heptonate = 3-dehydroquinate + phosphate. The protein operates within metabolic intermediate biosynthesis; chorismate biosynthesis; chorismate from D-erythrose 4-phosphate and phosphoenolpyruvate: step 2/7. In terms of biological role, catalyzes the conversion of 3-deoxy-D-arabino-heptulosonate 7-phosphate (DAHP) to dehydroquinate (DHQ). The sequence is that of 3-dehydroquinate synthase from Campylobacter jejuni subsp. jejuni serotype O:6 (strain 81116 / NCTC 11828).